Reading from the N-terminus, the 197-residue chain is MIHFSRSLTRLLGELKKLPGVGDKTALRLAFHLLKSPDNLTALAESLLEVKAGVRFCSVCFGITEDDPCHLCSTERDRTTICVVEEPQDILAMERSRAFKGRYHVLHGALSPLNGITPGDLKIAELMKRLESGAIREVLIATNFTVEGEATALYLTRLIKPLSIRVTRLAHGIPLGSDLEFIDAATVQRAVEGRSEL.

A C4-type zinc finger spans residues 57 to 72; the sequence is CSVCFGITEDDPCHLC. Residues 79–174 form the Toprim domain; sequence TTICVVEEPQ…RVTRLAHGIP (96 aa).

It belongs to the RecR family.

Its function is as follows. May play a role in DNA repair. It seems to be involved in an RecBC-independent recombinational process of DNA repair. It may act with RecF and RecO. This is Recombination protein RecR from Geotalea daltonii (strain DSM 22248 / JCM 15807 / FRC-32) (Geobacter daltonii).